A 104-amino-acid polypeptide reads, in one-letter code: NADH-quinone oxidoreductase subunit K (104 aa).

A run of 3 helical transmembrane segments spans residues 7-27 (PDMAMLLAAGLFALGLLGVLV), 31-51 (LLFMLMSIEIMLNAAALAFVA), and 63-83 (VMFLMILSLAAAEAAIGLAIL).

It belongs to the complex I subunit 4L family. In terms of assembly, NDH-1 is composed of 14 different subunits. Subunits NuoA, H, J, K, L, M, N constitute the membrane sector of the complex.

It localises to the cell inner membrane. It carries out the reaction a quinone + NADH + 5 H(+)(in) = a quinol + NAD(+) + 4 H(+)(out). Its function is as follows. NDH-1 shuttles electrons from NADH, via FMN and iron-sulfur (Fe-S) centers, to quinones in the respiratory chain. The immediate electron acceptor for the enzyme in this species is believed to be ubiquinone. Couples the redox reaction to proton translocation (for every two electrons transferred, four hydrogen ions are translocated across the cytoplasmic membrane), and thus conserves the redox energy in a proton gradient. This is NADH-quinone oxidoreductase subunit K from Gluconacetobacter diazotrophicus (strain ATCC 49037 / DSM 5601 / CCUG 37298 / CIP 103539 / LMG 7603 / PAl5).